Here is a 134-residue protein sequence, read N- to C-terminus: Small ribosomal subunit protein uS9 (134 aa).

The disordered stretch occupies residues 113–134; sequence REVERKKYGLKKARRAPQFSKR. Residues 120–134 show a composition bias toward basic residues; it reads YGLKKARRAPQFSKR.

Belongs to the universal ribosomal protein uS9 family.

The chain is Small ribosomal subunit protein uS9 from Thermotoga petrophila (strain ATCC BAA-488 / DSM 13995 / JCM 10881 / RKU-1).